Here is a 369-residue protein sequence, read N- to C-terminus: Maltose/maltodextrin import ATP-binding protein MalK (369 aa).

One can recognise an ABC transporter domain in the interval 4 to 234 (VQLRNVTKAW…PADRFVAGFI (231 aa)). Residue 36 to 43 (GPSGCGKS) coordinates ATP.

Belongs to the ABC transporter superfamily. Maltooligosaccharide importer (TC 3.A.1.1.1) family. The complex is composed of two ATP-binding proteins (MalK), two transmembrane proteins (MalG and MalK) and a solute-binding protein (MalE).

Its subcellular location is the cell inner membrane. The enzyme catalyses D-maltose(out) + ATP + H2O = D-maltose(in) + ADP + phosphate + H(+). Part of the ABC transporter complex MalEFGK involved in maltose/maltodextrin import. Responsible for energy coupling to the transport system. The protein is Maltose/maltodextrin import ATP-binding protein MalK of Salmonella paratyphi A (strain ATCC 9150 / SARB42).